A 294-amino-acid chain; its full sequence is uncharacterized protein (294 aa).

Positions 1 to 18 (MKKLLLIITVFFTCSAVA) are cleaved as a signal peptide.

This is an uncharacterized protein from Rickettsia bellii (strain RML369-C).